Here is a 366-residue protein sequence, read N- to C-terminus: Alanine racemase (366 aa).

Lys-40 acts as the Proton acceptor; specific for D-alanine in catalysis. Lys-40 is modified (N6-(pyridoxal phosphate)lysine). Arg-136 provides a ligand contact to substrate. Tyr-263 serves as the catalytic Proton acceptor; specific for L-alanine. A substrate-binding site is contributed by Met-310.

It belongs to the alanine racemase family. It depends on pyridoxal 5'-phosphate as a cofactor.

It carries out the reaction L-alanine = D-alanine. Its pathway is amino-acid biosynthesis; D-alanine biosynthesis; D-alanine from L-alanine: step 1/1. In terms of biological role, catalyzes the interconversion of L-alanine and D-alanine. May also act on other amino acids. In Streptococcus pyogenes serotype M2 (strain MGAS10270), this protein is Alanine racemase (alr).